Reading from the N-terminus, the 242-residue chain is Ribosomal RNA large subunit methyltransferase E (242 aa).

The S-adenosyl-L-methionine site is built by G64, W66, D84, D100, and D125. K165 (proton acceptor) is an active-site residue. The segment at 198–242 (SSETFLLGRGLKKASPNGLDSRSGTAAEPAPLVPIGTNSMPANGD) is disordered. The segment covering 233-242 (GTNSMPANGD) has biased composition (polar residues).

This sequence belongs to the class I-like SAM-binding methyltransferase superfamily. RNA methyltransferase RlmE family.

Its subcellular location is the cytoplasm. It carries out the reaction uridine(2552) in 23S rRNA + S-adenosyl-L-methionine = 2'-O-methyluridine(2552) in 23S rRNA + S-adenosyl-L-homocysteine + H(+). Functionally, specifically methylates the uridine in position 2552 of 23S rRNA at the 2'-O position of the ribose in the fully assembled 50S ribosomal subunit. This Verminephrobacter eiseniae (strain EF01-2) protein is Ribosomal RNA large subunit methyltransferase E.